We begin with the raw amino-acid sequence, 652 residues long: DNA ligase (652 aa).

Residues 29–33, 78–79, and E107 each bind NAD(+); these read DAEYD and SL. K109 serves as the catalytic N6-AMP-lysine intermediate. NAD(+)-binding residues include R130, E164, K278, and K302. Residues C395, C398, C413, and C418 each coordinate Zn(2+). In terms of domain architecture, BRCT spans 577–652; the sequence is DENAALSGMT…IKDEAWLESL (76 aa).

Belongs to the NAD-dependent DNA ligase family. LigA subfamily. Mg(2+) is required as a cofactor. The cofactor is Mn(2+).

The enzyme catalyses NAD(+) + (deoxyribonucleotide)n-3'-hydroxyl + 5'-phospho-(deoxyribonucleotide)m = (deoxyribonucleotide)n+m + AMP + beta-nicotinamide D-nucleotide.. In terms of biological role, DNA ligase that catalyzes the formation of phosphodiester linkages between 5'-phosphoryl and 3'-hydroxyl groups in double-stranded DNA using NAD as a coenzyme and as the energy source for the reaction. It is essential for DNA replication and repair of damaged DNA. This Streptococcus suis (strain 98HAH33) protein is DNA ligase.